A 397-amino-acid chain; its full sequence is 3-hydroxybenzoate 6-hydroxylase (397 aa).

Belongs to the 3-hydroxybenzoate 6-hydroxylase family. In terms of assembly, monomer. It depends on FAD as a cofactor.

The catalysed reaction is 3-hydroxybenzoate + NADH + O2 + H(+) = 2,5-dihydroxybenzoate + NAD(+) + H2O. Its activity is regulated as follows. Inhibited by copper, mercury and iron ions. In terms of biological role, catalyzes the NAD- or NADP-dependent conversion of 3-hydroxybenzoate to gentisate. NAD and NADP function equally well. This Klebsiella oxytoca protein is 3-hydroxybenzoate 6-hydroxylase (mhbM).